Reading from the N-terminus, the 450-residue chain is Ribosomal protein uS12 methylthiotransferase RimO (450 aa).

Residues 16 to 126 form the MTTase N-terminal domain; it reads PRISFVSLGC…VLDAVHQAVP (111 aa). Positions 25, 61, 90, 157, 161, and 164 each coordinate [4Fe-4S] cluster. One can recognise a Radical SAM core domain in the interval 143–380; it reads LTPRHYAYLK…MLKQQAISAR (238 aa). Residues 383 to 449 form the TRAM domain; sequence KRKVGTRQQV…AYDLIGSAVG (67 aa).

It belongs to the methylthiotransferase family. RimO subfamily. Requires [4Fe-4S] cluster as cofactor.

Its subcellular location is the cytoplasm. The enzyme catalyses L-aspartate(89)-[ribosomal protein uS12]-hydrogen + (sulfur carrier)-SH + AH2 + 2 S-adenosyl-L-methionine = 3-methylsulfanyl-L-aspartate(89)-[ribosomal protein uS12]-hydrogen + (sulfur carrier)-H + 5'-deoxyadenosine + L-methionine + A + S-adenosyl-L-homocysteine + 2 H(+). Catalyzes the methylthiolation of an aspartic acid residue of ribosomal protein uS12. The chain is Ribosomal protein uS12 methylthiotransferase RimO from Azorhizobium caulinodans (strain ATCC 43989 / DSM 5975 / JCM 20966 / LMG 6465 / NBRC 14845 / NCIMB 13405 / ORS 571).